The sequence spans 536 residues: Phosphoenolpyruvate carboxykinase (ATP) (536 aa).

Positions 61, 195, and 201 each coordinate substrate. ATP contacts are provided by residues lysine 201, histidine 220, and glycine 236–threonine 244. 2 residues coordinate Mn(2+): lysine 201 and histidine 220. Mn(2+) is bound at residue aspartate 257. ATP contacts are provided by glutamate 285, arginine 322, and threonine 447. Arginine 322 contributes to the substrate binding site.

This sequence belongs to the phosphoenolpyruvate carboxykinase (ATP) family. Requires Mn(2+) as cofactor.

The protein resides in the cytoplasm. It carries out the reaction oxaloacetate + ATP = phosphoenolpyruvate + ADP + CO2. It functions in the pathway carbohydrate biosynthesis; gluconeogenesis. Functionally, involved in the gluconeogenesis. Catalyzes the conversion of oxaloacetate (OAA) to phosphoenolpyruvate (PEP) through direct phosphoryl transfer between the nucleoside triphosphate and OAA. The polypeptide is Phosphoenolpyruvate carboxykinase (ATP) (Rhizobium etli (strain ATCC 51251 / DSM 11541 / JCM 21823 / NBRC 15573 / CFN 42)).